The following is a 461-amino-acid chain: Glycine--tRNA ligase (461 aa).

Residues Arg-100 and Glu-174 each coordinate substrate. ATP contacts are provided by residues 206-208 (RNE), 216-221 (FRTREF), 290-291 (EL), and 334-337 (GVDR). 221 to 225 (FEQME) contributes to the substrate binding site. 330 to 334 (EPSVG) serves as a coordination point for substrate.

Belongs to the class-II aminoacyl-tRNA synthetase family. In terms of assembly, homodimer.

Its subcellular location is the cytoplasm. It catalyses the reaction tRNA(Gly) + glycine + ATP = glycyl-tRNA(Gly) + AMP + diphosphate. In terms of biological role, catalyzes the attachment of glycine to tRNA(Gly). The sequence is that of Glycine--tRNA ligase from Caldanaerobacter subterraneus subsp. tengcongensis (strain DSM 15242 / JCM 11007 / NBRC 100824 / MB4) (Thermoanaerobacter tengcongensis).